The chain runs to 740 residues: MAPSFDTLSEQDLHEEEEEEIDFSDLKAQYEVKLEEGLDTFVVIDGLPVVPEESRQKLIKFLLRKLNTVGHTSEDAVFMPLNDKNMSEGYAFVEFETPEQAVAAVKQLHGTPLDKKHTLLVNKLMDIERYGREGRIDEEYKPPAIEPFKEKEHLRSWLADPNARDQFALYRGDKVGVFWNNKNHPPENVVDRAHWTQLFVQWSPKGTYLASVHPQGVQLWGGPAFSKQKQFPHPFVQLIEFSPGESYLTTWSARPIQVEEGQSILTYEEEGKNIIVWDIATGKPLRSFVSHDLTAGPAGDAEPKKKVQWPAFKWSADEKYVARMLQHQSISIYELPRMNLLGKTSVKIDGVMDFEWSPATVTREGVKQYEQLLCFWTPEIGSSPARVAMMSVPSKEIVRTRNLFNVSDVKLHWQSQGLYVCVKVDRHSKSKKSMATNLEIFRVREKGVPVEVVDSLKDTVINFAWEPNGNRFVLITTGEAVAGAAVAPKTAVSFFAPEKKGGAIGNFKLIRTIEKKNSNAIYWSPKGRFVVVATVHSQTSFDMDFWDMDFEGEKPEAEKDFAANLQLMKTTEHYGVTDIDWDPTGRYVVSSASVWTHQLENGWNLHTFAGQTLSENPTDKFKQFLWRPRPPTLLSKEEQKQVRKNLREYSKEFDEEDRYAVDIANTAVVEKRKRVLNEWIAWIRREKELLAEEKDAYGLPEEADDPKLAKDAAATTQEQGETVVEEIVEEIIEESEEVIG.

Over residues 1 to 10 (MAPSFDTLSE) the composition is skewed to polar residues. A disordered region spans residues 1–20 (MAPSFDTLSEQDLHEEEEEE). Positions 40-126 (TFVVIDGLPV…HTLLVNKLMD (87 aa)) constitute an RRM domain. 6 WD repeats span residues 193-230 (AHWTQLFVQWSPKGTYLASVHPQGVQLWGGPAFSKQKQ), 232-289 (PHPF…RSFV), 302-343 (EPKK…LLGK), 455-496 (SLKD…SFFA), 513-556 (IEKK…EKPE), and 571-609 (TEHYGVTDIDWDPTGRYVVSSASVWTHQLENGWNLHTFA). The interval 696 to 721 (AYGLPEEADDPKLAKDAAATTQEQGE) is disordered.

This sequence belongs to the eIF-3 subunit B family. In terms of assembly, component of the eukaryotic translation initiation factor 3 (eIF-3) complex.

It is found in the cytoplasm. Its function is as follows. RNA-binding component of the eukaryotic translation initiation factor 3 (eIF-3) complex, which is involved in protein synthesis of a specialized repertoire of mRNAs and, together with other initiation factors, stimulates binding of mRNA and methionyl-tRNAi to the 40S ribosome. The eIF-3 complex specifically targets and initiates translation of a subset of mRNAs involved in cell proliferation. The chain is Eukaryotic translation initiation factor 3 subunit B (prt1) from Aspergillus fumigatus (strain ATCC MYA-4609 / CBS 101355 / FGSC A1100 / Af293) (Neosartorya fumigata).